We begin with the raw amino-acid sequence, 430 residues long: Enolase (430 aa).

A (2R)-2-phosphoglycerate-binding site is contributed by Q163. E205 (proton donor) is an active-site residue. Residues D242, E287, and D314 each coordinate Mg(2+). (2R)-2-phosphoglycerate contacts are provided by K339, R368, S369, and K390. K339 functions as the Proton acceptor in the catalytic mechanism.

This sequence belongs to the enolase family. Requires Mg(2+) as cofactor.

The protein localises to the cytoplasm. The protein resides in the secreted. Its subcellular location is the cell surface. It carries out the reaction (2R)-2-phosphoglycerate = phosphoenolpyruvate + H2O. The protein operates within carbohydrate degradation; glycolysis; pyruvate from D-glyceraldehyde 3-phosphate: step 4/5. Functionally, catalyzes the reversible conversion of 2-phosphoglycerate (2-PG) into phosphoenolpyruvate (PEP). It is essential for the degradation of carbohydrates via glycolysis. The polypeptide is Enolase (Bacillus velezensis (strain DSM 23117 / BGSC 10A6 / LMG 26770 / FZB42) (Bacillus amyloliquefaciens subsp. plantarum)).